The following is a 204-amino-acid chain: Large ribosomal subunit protein uL22c (204 aa).

This sequence belongs to the universal ribosomal protein uL22 family. Part of the 50S ribosomal subunit.

The protein resides in the plastid. It localises to the chloroplast. In terms of biological role, this protein binds specifically to 23S rRNA. The globular domain of the protein is located near the polypeptide exit tunnel on the outside of the subunit, while an extended beta-hairpin is found that lines the wall of the exit tunnel in the center of the 70S ribosome. The chain is Large ribosomal subunit protein uL22c (rpl22) from Pisum sativum (Garden pea).